Consider the following 2092-residue polypeptide: RNA-directed RNA polymerase L (2092 aa).

Residues Val18–Gly215 are endonuclease. The Mn(2+) site is built by His79, Asp111, and Glu125. Lys143 acts as the For endonuclease activity in catalysis. The RdRp catalytic domain occupies Ala975–Leu1166. Residue Asp1134 participates in Mg(2+) binding. Residues Gly1706–Lys1822 form a cap-binding region.

The protein belongs to the Bunyavirales RNA polymerase family. Homomultimer. Interacts with glycoprotein N; this interaction allows efficient polymerase packaging into virus particles. Interacts with nucleoprotein N. The cofactor is Mn(2+). Requires Mg(2+) as cofactor.

The protein localises to the host Golgi apparatus. It is found in the host endoplasmic reticulum. The protein resides in the host endoplasmic reticulum-Golgi intermediate compartment. It localises to the virion. The enzyme catalyses RNA(n) + a ribonucleoside 5'-triphosphate = RNA(n+1) + diphosphate. In terms of biological role, RNA-dependent RNA polymerase, which is responsible for the replication and transcription of the viral RNA genome using antigenomic RNA as an intermediate. During transcription, synthesizes subgenomic RNAs and assures their capping by a cap-snatching mechanism, which involves the endonuclease activity cleaving the host capped pre-mRNAs. These short capped RNAs are then used as primers for viral transcription. The 3'-end of subgenomic mRNAs molecules are not polyadenylated. During replication, the polymerase binds the 5' and 3' vRNA extremities at distinct sites. In turn, significant conformational changes occur in the polymerase and in vRNA to initiate active RNA synthesis. As a consequence of the use of the same enzyme for both transcription and replication, these mechanisms need to be well coordinated. The sequence is that of RNA-directed RNA polymerase L from Aedes (Bovine).